The primary structure comprises 425 residues: Glucose-6-phosphate 1-dehydrogenase (425 aa).

Residues Arg-44 and Lys-135 each coordinate NADP(+). Residues His-165, Lys-169, Glu-201, and Asp-220 each contribute to the substrate site. His-225 serves as the catalytic Proton acceptor. Lys-311 contributes to the substrate binding site.

The protein belongs to the glucose-6-phosphate dehydrogenase family.

The catalysed reaction is D-glucose 6-phosphate + NADP(+) = 6-phospho-D-glucono-1,5-lactone + NADPH + H(+). Its pathway is carbohydrate degradation; pentose phosphate pathway; D-ribulose 5-phosphate from D-glucose 6-phosphate (oxidative stage): step 1/3. In terms of biological role, catalyzes the oxidation of glucose 6-phosphate to 6-phosphogluconolactone. The chain is Glucose-6-phosphate 1-dehydrogenase from Helicobacter pylori (strain J99 / ATCC 700824) (Campylobacter pylori J99).